A 173-amino-acid polypeptide reads, in one-letter code: Bursicon (173 aa).

An N-terminal signal peptide occupies residues 1–32; sequence MLRHLLRHENNKVFVLILLYCVLVSILKLCTA. Disulfide bonds link Cys-52–Cys-101, Cys-66–Cys-115, Cys-76–Cys-136, Cys-80–Cys-138, and Cys-98–Cys-141. The CTCK domain occupies 52 to 142; it reads CQVTPVIHVL…PLECMCRPCT (91 aa).

As to quaternary structure, heterodimer of Burs and Pburs. In terms of tissue distribution, expressed in one to two pairs of neurons in each of the thoracic and abdominal neuromeres of the larval CNS. Coexpressed with CCAP in most CCAP-specific neurons. Coexpressed with Pburs in four bilateral neurons in thoracic and abdominal neuromeres of the ventral nervous system.

The protein localises to the secreted. Functionally, final heterodimeric neurohormone released at the end of the molting cycle, involved in the sclerotization (tanning) of the insect cuticle, melanization and wing spreading. Heterodimer specifically activates the G protein-coupled receptor rk. In Drosophila melanogaster (Fruit fly), this protein is Bursicon.